The primary structure comprises 287 residues: Large ribosomal subunit protein uL2 (287 aa).

The segment at 221–287 (RGSVMNPCDH…SKRSRGGRDS (67 aa)) is disordered. Residues 258–287 (KTRKRNKPSNRFVLRKRRRVSKRSRGGRDS) show a composition bias toward basic residues.

Belongs to the universal ribosomal protein uL2 family. In terms of assembly, part of the 50S ribosomal subunit. Forms a bridge to the 30S subunit in the 70S ribosome.

One of the primary rRNA binding proteins. Required for association of the 30S and 50S subunits to form the 70S ribosome, for tRNA binding and peptide bond formation. It has been suggested to have peptidyltransferase activity; this is somewhat controversial. Makes several contacts with the 16S rRNA in the 70S ribosome. The sequence is that of Large ribosomal subunit protein uL2 from Prochlorococcus marinus (strain MIT 9211).